The primary structure comprises 472 residues: 3-isopropylmalate dehydratase large subunit (472 aa).

3 residues coordinate [4Fe-4S] cluster: Cys-347, Cys-407, and Cys-410.

It belongs to the aconitase/IPM isomerase family. LeuC type 1 subfamily. Heterodimer of LeuC and LeuD. It depends on [4Fe-4S] cluster as a cofactor.

It catalyses the reaction (2R,3S)-3-isopropylmalate = (2S)-2-isopropylmalate. The protein operates within amino-acid biosynthesis; L-leucine biosynthesis; L-leucine from 3-methyl-2-oxobutanoate: step 2/4. Functionally, catalyzes the isomerization between 2-isopropylmalate and 3-isopropylmalate, via the formation of 2-isopropylmaleate. The chain is 3-isopropylmalate dehydratase large subunit from Synechococcus sp. (strain CC9605).